Reading from the N-terminus, the 109-residue chain is U-scoloptoxin(16)-Cw1a (109 aa).

Positions 1–21 (MNAVFIVFLSAILSYPHESFA) are cleaved as a signal peptide.

The protein belongs to the scoloptoxin-16 family. Contains 4 disulfide bonds. In terms of tissue distribution, expressed by the venom gland.

It is found in the secreted. In Cormocephalus westwoodi (Westwood's green centipede), this protein is U-scoloptoxin(16)-Cw1a.